Consider the following 711-residue polypeptide: Long-chain-fatty-acid--CoA ligase 4 (711 aa).

A helical; Signal-anchor for type III membrane protein membrane pass occupies residues 8 to 28 (LTIILLPVHLLITIYSALIFI). Residues 29–711 (PWYFLTNAKK…KDIERMYGGK (683 aa)) are Cytoplasmic-facing. Serine 447 bears the Phosphoserine mark.

The protein belongs to the ATP-dependent AMP-binding enzyme family. Requires Mg(2+) as cofactor. In terms of tissue distribution, abundant in steroidogenic tissues, also found in the kidney, brain and liver.

Its subcellular location is the mitochondrion outer membrane. The protein resides in the peroxisome membrane. It localises to the microsome membrane. It is found in the endoplasmic reticulum membrane. The protein localises to the cell membrane. The catalysed reaction is a long-chain fatty acid + ATP + CoA = a long-chain fatty acyl-CoA + AMP + diphosphate. The enzyme catalyses (5Z,8Z,11Z,14Z)-eicosatetraenoate + ATP + CoA = (5Z,8Z,11Z,14Z)-eicosatetraenoyl-CoA + AMP + diphosphate. It catalyses the reaction 15-hydroxy-(5Z,8Z,11Z,13E)-eicosatetraenoate + ATP + CoA = 15-hydroxy-(5Z,8Z,11Z,13E)-eicosatetraenoyl-CoA + AMP + diphosphate. It carries out the reaction 12-hydroxy-(5Z,8Z,10E,14Z)-eicosatetraenoate + ATP + CoA = 12-hydroxy-(5Z,8Z,10E,14Z)-eicosatetraenoyl-CoA + AMP + diphosphate. The catalysed reaction is 5-hydroxy-(6E,8Z,11Z,14Z)-eicosatetraenoate + ATP + CoA = 5-hydroxy-(6E,8Z,11Z,14Z)-eicosatetraenoyl-CoA + AMP + diphosphate. The enzyme catalyses 5,6-epoxy-(8Z,11Z,14Z)-eicosatrienoate + ATP + CoA = 5,6-epoxy-(8Z,11Z,14Z)-eicosatrienoyl-CoA + AMP + diphosphate. It catalyses the reaction 14,15-epoxy-(5Z,8Z,11Z)-eicosatrienoate + ATP + CoA = 14,15-epoxy-(5Z,8Z,11Z)-eicosatrienoyl-CoA + AMP + diphosphate. It carries out the reaction 11,12-epoxy-(5Z,8Z,14Z)-eicosatrienoate + ATP + CoA = 11,12-epoxy-(5Z,8Z,14Z)-eicosatrienoyl-CoA + AMP + diphosphate. The catalysed reaction is 8,9-epoxy-(5Z,11Z,14Z)-eicosatrienoate + ATP + CoA = 8,9-epoxy-(5Z,11Z,14Z)-eicosatrienoyl-CoA + AMP + diphosphate. The enzyme catalyses hexadecanoate + ATP + CoA = hexadecanoyl-CoA + AMP + diphosphate. It catalyses the reaction (E)-hexadec-2-enoate + ATP + CoA = (2E)-hexadecenoyl-CoA + AMP + diphosphate. With respect to regulation, both triacsin C and rosiglitazone inhibit arachidonoyl-CoA ligase activity. Its function is as follows. Catalyzes the conversion of long-chain fatty acids to their active form acyl-CoA for both synthesis of cellular lipids, and degradation via beta-oxidation. Preferentially activates arachidonate and eicosapentaenoate as substrates. Preferentially activates 8,9-EET &gt; 14,15-EET &gt; 5,6-EET &gt; 11,12-EET. Modulates glucose-stimulated insulin secretion by regulating the levels of unesterified EETs. Modulates prostaglandin E2 secretion. The polypeptide is Long-chain-fatty-acid--CoA ligase 4 (Acsl4) (Mus musculus (Mouse)).